A 307-amino-acid polypeptide reads, in one-letter code: Acyl transferase (307 aa).

Residues Ser-116, Asp-213, and His-243 each act as charge relay system in the active site.

It belongs to the LuxD family.

Its pathway is lipid metabolism; fatty acid reduction for biolumincescence. Acyl transferase is part of the fatty acid reductase system required for aldehyde biosynthesis; it produces fatty acids for the luminescent reaction. The chain is Acyl transferase from Aliivibrio fischeri (Vibrio fischeri).